A 610-amino-acid polypeptide reads, in one-letter code: Elongation factor 4 (610 aa).

The tr-type G domain maps to 12–194 (EKIRNFSIIA…QIVEKVPAPQ (183 aa)). GTP is bound by residues 24–29 (DHGKST) and 141–144 (NKID).

The protein belongs to the TRAFAC class translation factor GTPase superfamily. Classic translation factor GTPase family. LepA subfamily.

The protein localises to the cell membrane. It catalyses the reaction GTP + H2O = GDP + phosphate + H(+). In terms of biological role, required for accurate and efficient protein synthesis under certain stress conditions. May act as a fidelity factor of the translation reaction, by catalyzing a one-codon backward translocation of tRNAs on improperly translocated ribosomes. Back-translocation proceeds from a post-translocation (POST) complex to a pre-translocation (PRE) complex, thus giving elongation factor G a second chance to translocate the tRNAs correctly. Binds to ribosomes in a GTP-dependent manner. The sequence is that of Elongation factor 4 from Streptococcus thermophilus (strain ATCC BAA-250 / LMG 18311).